The following is a 464-amino-acid chain: MFRQEQRWPRQLWPMGSLQPDSGNASWNGTEGPGGGTRATPYSLQVTVTLVCLVGLLILLTVFGNVLVIIAVFTSRALKAPQNLFLVSLASADILVATLVIPFSLANEVMGYWYFGKAWCEIYLALDVLFCTSSIVHLCAISLDRYWSITQAIEYNLKRTPRRIKAIIVTVWVISAVISFPPLISFEKAGGGGQQPAEPRCEINDQKWYVISSSIGSFFAPCLIMILVYVRIYQIAKRRTRVPPSRRGPDAHAAAPPGGAERRPNGLGLERGVGPGGAEAEPLPTQVNGAPGEPAPAGPRDAEALDLEESSSSEHAERPPGARRPERGLRAKSKARASQVKPGDSLPRRAPGAAGSGTSGSGPGEERGGGAKASRWRGRQNREKRFTFVLAVVIGVFVVCWFPFFFTYTLTAVGCSVPRTLFKFFFWFGYCNSSLNPVIYTIFNHDFRRAFKKILCRGDRKRIV.

The Extracellular portion of the chain corresponds to 1–47 (MFRQEQRWPRQLWPMGSLQPDSGNASWNGTEGPGGGTRATPYSLQVT). The segment at 13–34 (WPMGSLQPDSGNASWNGTEGPG) is disordered. Positions 19–29 (QPDSGNASWNG) are enriched in polar residues. 2 N-linked (GlcNAc...) asparagine glycosylation sites follow: Asn24 and Asn28. Residues 48-73 (VTLVCLVGLLILLTVFGNVLVIIAVF) traverse the membrane as a helical segment. Residues 74–84 (TSRALKAPQNL) are Cytoplasmic-facing. The chain crosses the membrane as a helical span at residues 85–110 (FLVSLASADILVATLVIPFSLANEVM). Topologically, residues 111 to 120 (GYWYFGKAWC) are extracellular. Cys120 and Cys201 are disulfide-bonded. A helical transmembrane segment spans residues 121-143 (EIYLALDVLFCTSSIVHLCAISL). Topologically, residues 144–163 (DRYWSITQAIEYNLKRTPRR) are cytoplasmic. Residues 164-187 (IKAIIVTVWVISAVISFPPLISFE) traverse the membrane as a helical segment. The Extracellular portion of the chain corresponds to 188 to 206 (KAGGGGQQPAEPRCEINDQ). A helical transmembrane segment spans residues 207 to 231 (KWYVISSSIGSFFAPCLIMILVYVR). Residues 232 to 388 (IYQIAKRRTR…RQNREKRFTF (157 aa)) are Cytoplasmic-facing. A disordered region spans residues 240–378 (TRVPPSRRGP…GGAKASRWRG (139 aa)). Positions 251 to 268 (AHAAAPPGGAERRPNGLG) are enriched in low complexity. Residues 312–329 (SSEHAERPPGARRPERGL) are compositionally biased toward basic and acidic residues. Ser345 carries the phosphoserine modification. A compositionally biased stretch (gly residues) spans 354–363 (AGSGTSGSGP). Arg367 bears the Omega-N-methylarginine mark. The chain crosses the membrane as a helical span at residues 389 to 413 (VLAVVIGVFVVCWFPFFFTYTLTAV). The Extracellular portion of the chain corresponds to 414-423 (GCSVPRTLFK). Residues 424 to 444 (FFFWFGYCNSSLNPVIYTIFN) traverse the membrane as a helical segment. The Cytoplasmic portion of the chain corresponds to 445–464 (HDFRRAFKKILCRGDRKRIV). The S-palmitoyl cysteine moiety is linked to residue Cys456.

It belongs to the G-protein coupled receptor 1 family. Adrenergic receptor subfamily. ADRA2A sub-subfamily. Component of the ADA2A-containing complex (ATAC), composed of KAT14, KAT2A, TADA2L, TADA3L, ZZ3, MBIP, WDR5, YEATS2, CCDC101 and DR1.

The protein resides in the cell membrane. Its function is as follows. Alpha-2 adrenergic receptors mediate the catecholamine-induced inhibition of adenylate cyclase through the action of G proteins. Component of the ATAC complex, a complex with histone acetyltransferase activity on histones H3 and H4. The protein is Alpha-2A adrenergic receptor of Cavia porcellus (Guinea pig).